We begin with the raw amino-acid sequence, 275 residues long: MLPTAIVLTILLGIIAYIWGYPHWLDWREKQLFQRPLPPHWQAILGDRLPFYAQLSPQQRQKLEAKIQLFLQQKQFIGCNDFVLTDEVRLVIAAQACYLALELGSNPYPRLDTILVYPDAFQVRQITSPDGYVVEEEDTVRAGESWDRAGQLILAWGTIAWDLERWQDGHNVIFHEFAHQLDMGDGAMNGVPKLGRRNDYQRWQSIFASEYQQLLSQLENNLPTVIDPYGATNPCEFFAVVTETFFEKGQELQHNHGQLYQVLRKYYCLEPLINC.

This sequence belongs to the MtfA family.

This is an uncharacterized protein from Synechocystis sp. (strain ATCC 27184 / PCC 6803 / Kazusa).